An 857-amino-acid polypeptide reads, in one-letter code: DNA mismatch repair protein MutS (857 aa).

608-615 (GPNMSGKS) is an ATP binding site.

This sequence belongs to the DNA mismatch repair MutS family.

This protein is involved in the repair of mismatches in DNA. It is possible that it carries out the mismatch recognition step. This protein has a weak ATPase activity. This is DNA mismatch repair protein MutS from Lacticaseibacillus paracasei (strain ATCC 334 / BCRC 17002 / CCUG 31169 / CIP 107868 / KCTC 3260 / NRRL B-441) (Lactobacillus paracasei).